We begin with the raw amino-acid sequence, 301 residues long: uncharacterized protein (301 aa).

Catalysis depends on charge relay system residues Ser44 and Tyr107. Residue Tyr133 is the Proton donor of the active site. Lys162 functions as the Schiff-base intermediate with substrate in the catalytic mechanism.

This sequence belongs to the DapA family. In terms of assembly, homotetramer.

It localises to the cytoplasm. This is an uncharacterized protein from Pyrobaculum islandicum (strain DSM 4184 / JCM 9189 / GEO3).